The sequence spans 691 residues: Methionine--tRNA ligase (691 aa).

The 'HIGH' region motif lies at 14–24 (PYANGPFHLGH). Cys148, Cys151, Cys161, and Cys164 together coordinate Zn(2+). The 'KMSKS' region motif lies at 344–348 (KMSKS). Lys347 contributes to the ATP binding site. Residues 585–691 (DFDRVDLRVA…PGAKPGMRVR (107 aa)) form the tRNA-binding domain.

The protein belongs to the class-I aminoacyl-tRNA synthetase family. MetG type 1 subfamily. As to quaternary structure, homodimer. Zn(2+) serves as cofactor.

It is found in the cytoplasm. The catalysed reaction is tRNA(Met) + L-methionine + ATP = L-methionyl-tRNA(Met) + AMP + diphosphate. Functionally, is required not only for elongation of protein synthesis but also for the initiation of all mRNA translation through initiator tRNA(fMet) aminoacylation. This Verminephrobacter eiseniae (strain EF01-2) protein is Methionine--tRNA ligase.